The primary structure comprises 81 residues: ATP synthase subunit c (81 aa).

2 helical membrane passes run Ala-6 to Ile-26 and Leu-57 to Ala-77.

Belongs to the ATPase C chain family. In terms of assembly, F-type ATPases have 2 components, F(1) - the catalytic core - and F(0) - the membrane proton channel. F(1) has five subunits: alpha(3), beta(3), gamma(1), delta(1), epsilon(1). F(0) has four main subunits: a(1), b(1), b'(1) and c(10-14). The alpha and beta chains form an alternating ring which encloses part of the gamma chain. F(1) is attached to F(0) by a central stalk formed by the gamma and epsilon chains, while a peripheral stalk is formed by the delta, b and b' chains.

It is found in the cellular thylakoid membrane. Its function is as follows. F(1)F(0) ATP synthase produces ATP from ADP in the presence of a proton or sodium gradient. F-type ATPases consist of two structural domains, F(1) containing the extramembraneous catalytic core and F(0) containing the membrane proton channel, linked together by a central stalk and a peripheral stalk. During catalysis, ATP synthesis in the catalytic domain of F(1) is coupled via a rotary mechanism of the central stalk subunits to proton translocation. In terms of biological role, key component of the F(0) channel; it plays a direct role in translocation across the membrane. A homomeric c-ring of between 10-14 subunits forms the central stalk rotor element with the F(1) delta and epsilon subunits. The chain is ATP synthase subunit c from Gloeothece citriformis (strain PCC 7424) (Cyanothece sp. (strain PCC 7424)).